We begin with the raw amino-acid sequence, 72 residues long: Protein kish-A (72 aa).

A signal peptide spans 1-26 (MSAIFNFQSLLIVILLLICTCAYLRS). Residues 27 to 53 (LVPNLLDKNKTGVLGIFWKCARIGERK) lie on the Extracellular side of the membrane. N-linked (GlcNAc...) asparagine glycosylation occurs at Asn35. The helical transmembrane segment at 54–71 (SPYVAVCCVVMAFSILFM) threads the bilayer. Residue Gln72 is a topological domain, cytoplasmic.

It belongs to the KISH family.

The protein localises to the golgi apparatus membrane. Functionally, involved in the early part of the secretory pathway. The protein is Protein kish-A (tmem167a) of Xenopus laevis (African clawed frog).